The primary structure comprises 538 residues: MFS-type transporter oryC (538 aa).

Transmembrane regions (helical) follow at residues 14–34 (LTGG…MSLF), 67–87 (TVTA…FTIG), 96–116 (ILLG…SFSL), 120–140 (FVGR…APIW), 162–182 (IFGF…GGSI), and 186–206 (FPLA…PWLP). Asn268 carries N-linked (GlcNAc...) asparagine glycosylation. 6 helical membrane-spanning segments follow: residues 288-308 (FGGI…SVGL), 315-335 (LLAA…VLLV), 342-362 (GLML…TILL), 379-399 (VAFF…VPWL), 416-436 (VATA…PIGI), and 443-463 (FWIV…FLYP). N-linked (GlcNAc...) asparagine glycosylation is present at Asn467.

The protein belongs to the major facilitator superfamily. Sugar transporter (TC 2.A.1.1) family.

It is found in the membrane. Functionally, MFS-type transporter; part of the gene cluster that mediates the biosynthesis of oryzines, natural products with an unusual maleidride backbone. This Aspergillus oryzae (strain ATCC 42149 / RIB 40) (Yellow koji mold) protein is MFS-type transporter oryC.